Here is a 361-residue protein sequence, read N- to C-terminus: Arginine N(omega)-methyltransferase (361 aa).

The segment covering 1–17 has biased composition (basic and acidic residues); sequence MRHVQEARAVPAEHEAR. Positions 1–24 are disordered; that stretch reads MRHVQEARAVPAEHEARPAPVTMP. The SAM-dependent MTase PRMT-type domain occupies 65-361; that stretch reads DADAFAQIAR…WSDFTLRVSI (297 aa).

It belongs to the class I-like SAM-binding methyltransferase superfamily. Protein arginine N-methyltransferase family.

It catalyses the reaction L-arginine + S-adenosyl-L-methionine = N(omega)-methyl-L-arginine + S-adenosyl-L-homocysteine + H(+). Its pathway is antibiotic biosynthesis. Involved in the biosynthesis of the glucosamine-nitrosourea antibiotic streptozotocin (SZN). Catalyzes the conversion of L-arginine to N(omega)-methyl-L-arginine (L-NMA), using S-adenosyl-L-methionine (SAM) as a methyl donor. The chain is Arginine N(omega)-methyltransferase from Streptomyces achromogenes subsp. streptozoticus.